Consider the following 86-residue polypeptide: Stage V sporulation protein S (86 aa).

In terms of biological role, interferes with sporulation at an early stage. Seems to play a positive role in allowing cells to progress beyond stage V of sporulation. The protein is Stage V sporulation protein S of Bacillus subtilis (strain 168).